The sequence spans 260 residues: Thiazole synthase (260 aa).

Residue lysine 96 is the Schiff-base intermediate with DXP of the active site. 1-deoxy-D-xylulose 5-phosphate is bound by residues glycine 157, 184–185 (AG), and 206–207 (NT).

This sequence belongs to the ThiG family. As to quaternary structure, homotetramer. Forms heterodimers with either ThiH or ThiS.

It localises to the cytoplasm. It catalyses the reaction [ThiS sulfur-carrier protein]-C-terminal-Gly-aminoethanethioate + 2-iminoacetate + 1-deoxy-D-xylulose 5-phosphate = [ThiS sulfur-carrier protein]-C-terminal Gly-Gly + 2-[(2R,5Z)-2-carboxy-4-methylthiazol-5(2H)-ylidene]ethyl phosphate + 2 H2O + H(+). The protein operates within cofactor biosynthesis; thiamine diphosphate biosynthesis. Functionally, catalyzes the rearrangement of 1-deoxy-D-xylulose 5-phosphate (DXP) to produce the thiazole phosphate moiety of thiamine. Sulfur is provided by the thiocarboxylate moiety of the carrier protein ThiS. In vitro, sulfur can be provided by H(2)S. In Bradyrhizobium sp. (strain ORS 278), this protein is Thiazole synthase.